The primary structure comprises 133 residues: ATP synthase epsilon chain (133 aa).

This sequence belongs to the ATPase epsilon chain family. As to quaternary structure, F-type ATPases have 2 components, CF(1) - the catalytic core - and CF(0) - the membrane proton channel. CF(1) has five subunits: alpha(3), beta(3), gamma(1), delta(1), epsilon(1). CF(0) has three main subunits: a, b and c.

It is found in the cell membrane. Produces ATP from ADP in the presence of a proton gradient across the membrane. The polypeptide is ATP synthase epsilon chain (Bacillus anthracis (strain A0248)).